A 477-amino-acid chain; its full sequence is SH3 domain-binding protein 5 homolog (477 aa).

Positions 12–95 form a coiled coil; it reads QIQIELENLN…AAVKFQRANE (84 aa). Residues Ser113 and Ser115 each carry the phosphoserine modification. A coiled-coil region spans residues 122–221; it reads NAWQEMLNHA…YSTALRNLER (100 aa). Disordered regions lie at residues 224–258 and 276–306; these read EDIH…ALPS and GSQM…ETGA. Over residues 291–305 the composition is skewed to acidic residues; that stretch reads ETEDEEDACDYDETG.

The protein belongs to the SH3BP5 family.

The chain is SH3 domain-binding protein 5 homolog (pcs) from Drosophila melanogaster (Fruit fly).